Reading from the N-terminus, the 147-residue chain is MVEWTDDERAIINGIFSNLDYEEIGRKSLCRCLIVYPWTQRYFGGFGNLYNAETILCNPLIAAHGTKILHGLDRALKNMDDIKNTYAELSLLHSDKLHVDPDNFRLLADCLTVVIAAKMGAAFTVDTQVAWQKFLAVVVSALGRQYH.

In terms of domain architecture, Globin spans 3 to 147 (EWTDDERAII…VVSALGRQYH (145 aa)). Heme b-binding residues include His-64 and His-93.

Belongs to the globin family. In terms of assembly, heterotetramer of two alpha chains and two beta chains. As to expression, red blood cells.

In terms of biological role, involved in oxygen transport from gills to the various peripheral tissues. In Melanogrammus aeglefinus (Haddock), this protein is Hemoglobin subunit beta (hbb).